Consider the following 280-residue polypeptide: Probable 2-(5''-triphosphoribosyl)-3'-dephosphocoenzyme-A synthase (280 aa).

It belongs to the CitG/MdcB family.

The enzyme catalyses 3'-dephospho-CoA + ATP = 2'-(5''-triphospho-alpha-D-ribosyl)-3'-dephospho-CoA + adenine. This chain is Probable 2-(5''-triphosphoribosyl)-3'-dephosphocoenzyme-A synthase, found in Lactiplantibacillus plantarum (strain ATCC BAA-793 / NCIMB 8826 / WCFS1) (Lactobacillus plantarum).